The sequence spans 230 residues: 3,4-dihydroxy-2-butanone 4-phosphate synthase (230 aa).

D-ribulose 5-phosphate is bound by residues 42–43, Asp-47, 155–159, and Glu-179; these read RE and RRGHT. Glu-43 contacts Mg(2+). His-158 serves as a coordination point for Mg(2+).

It belongs to the DHBP synthase family. In terms of assembly, homodimer. Requires Mg(2+) as cofactor. The cofactor is Mn(2+).

It catalyses the reaction D-ribulose 5-phosphate = (2S)-2-hydroxy-3-oxobutyl phosphate + formate + H(+). It functions in the pathway cofactor biosynthesis; riboflavin biosynthesis; 2-hydroxy-3-oxobutyl phosphate from D-ribulose 5-phosphate: step 1/1. In terms of biological role, catalyzes the conversion of D-ribulose 5-phosphate to formate and 3,4-dihydroxy-2-butanone 4-phosphate. The protein is 3,4-dihydroxy-2-butanone 4-phosphate synthase of Bordetella bronchiseptica (strain ATCC BAA-588 / NCTC 13252 / RB50) (Alcaligenes bronchisepticus).